We begin with the raw amino-acid sequence, 1663 residues long: Glutamine-rich protein 2 (1663 aa).

5 disordered regions span residues 80 to 239 (HGGF…LVPA), 423 to 481 (GLVQ…GTGQ), 575 to 615 (AQPR…QHGL), 880 to 925 (TYQQ…QVYP), and 948 to 984 (RGPG…APGQ). 2 stretches are compositionally biased toward polar residues: residues 84 to 103 (TSLT…QPSI) and 131 to 150 (GVSS…QQQP). Over residues 171–182 (SDSDRHRSREKL) the composition is skewed to basic and acidic residues. The segment covering 206-217 (QPSSVPASQSQV) has biased composition (low complexity). A compositionally biased stretch (basic and acidic residues) spans 958–975 (HGQEGLDPNRTRASDRHG). Coiled-coil stretches lie at residues 1085-1160 (KTVK…MENS) and 1286-1325 (EDHR…KADK). Basic and acidic residues predominate over residues 1609-1619 (TRLPGILRKDS). The interval 1609 to 1663 (TRLPGILRKDSSGTSKRKSQQPRPHVHRPPSLSSNGQLPSRPQSAQISAGNTSER) is disordered. Basic residues predominate over residues 1623-1636 (SKRKSQQPRPHVHR). The span at 1639–1663 (SLSSNGQLPSRPQSAQISAGNTSER) shows a compositional bias: polar residues.

Interacts with AKAP3, ODF2 and TSSK4. Interacts with AKAP4. Expressed in the sperm.

The protein localises to the nucleus membrane. Its subcellular location is the nucleus. The protein resides in the cytoplasm. It localises to the cell projection. It is found in the cilium. The protein localises to the flagellum. In terms of biological role, has an essential role in the formation of sperm flagella and flagellar structure maintainance. It acts as a suppressor of ubiquitination and degradation of proteins involved in flagellar development and motility. The chain is Glutamine-rich protein 2 (QRICH2) from Homo sapiens (Human).